A 277-amino-acid chain; its full sequence is General transcription factor IIF subunit 2 (277 aa).

The protein belongs to the TFIIF beta subunit family. In terms of assembly, heterodimer of an alpha and a beta subunit.

Its subcellular location is the nucleus. In terms of biological role, TFIIF is a general transcription initiation factor that binds to RNA polymerase II and helps to recruit it to the initiation complex in collaboration with TFIIB. In Drosophila melanogaster (Fruit fly), this protein is General transcription factor IIF subunit 2 (TfIIFbeta).